A 327-amino-acid chain; its full sequence is Alkene monooxygenase system, ferredoxin--NAD(+) reductase component (327 aa).

Positions 1 to 89 (MRLNDGRSFS…DLEINVRAGD (89 aa)) constitute a 2Fe-2S ferredoxin-type domain. 4 residues coordinate [2Fe-2S] cluster: Cys32, Cys37, Cys40, and Cys73. One can recognise an FAD-binding FR-type domain in the interval 96–194 (PRRHAARVTV…EGPYGRAYLR (99 aa)).

The protein belongs to the bacterial ring-hydroxylating dioxygenase ferredoxin reductase family. In terms of assembly, monomer. The alkene monooxygenase multicomponent enzyme system is composed of an electron transfer component and a monooxygenase component interacting with the effector protein XamoD. The electron transfer component is composed of a ferredoxin reductase (XamoF) and a ferredoxin (XamoC), and the monooxygenase component is formed by a heterohexamer (dimer of heterotrimers) of two alpha subunits (XamoA), two beta subunits (XamoE) and two gamma subunits (XamoB). The cofactor is FAD. [2Fe-2S] cluster serves as cofactor.

The protein resides in the cytoplasm. It catalyses the reaction 2 reduced [2Fe-2S]-[ferredoxin] + NAD(+) + H(+) = 2 oxidized [2Fe-2S]-[ferredoxin] + NADH. Its function is as follows. Reductase component of the alkene monooxygenase multicomponent enzyme system which catalyzes the O2- and NADH-dependent epoxidation of short chain (C2 to C6) alkenes to their corresponding epoxides. Ferredoxin reductase catalyzes the transfer of electrons from NADH to ferredoxin (XamoC). NADPH is also effective but with a rate approximately 3-fold lower than with NADH. The protein is Alkene monooxygenase system, ferredoxin--NAD(+) reductase component of Xanthobacter autotrophicus (strain ATCC BAA-1158 / Py2).